A 709-amino-acid polypeptide reads, in one-letter code: Elongation factor G (709 aa).

The region spanning 8 to 297 (ANTRNIGIMA…AVIDYLPSPL (290 aa)) is the tr-type G domain. GTP is bound by residues 17–24 (AHVDAGKT), 81–85 (DTPGH), and 135–138 (NKMD).

It belongs to the TRAFAC class translation factor GTPase superfamily. Classic translation factor GTPase family. EF-G/EF-2 subfamily.

The protein resides in the cytoplasm. Functionally, catalyzes the GTP-dependent ribosomal translocation step during translation elongation. During this step, the ribosome changes from the pre-translocational (PRE) to the post-translocational (POST) state as the newly formed A-site-bound peptidyl-tRNA and P-site-bound deacylated tRNA move to the P and E sites, respectively. Catalyzes the coordinated movement of the two tRNA molecules, the mRNA and conformational changes in the ribosome. In Lactococcus lactis subsp. cremoris (strain MG1363), this protein is Elongation factor G.